The following is a 2261-amino-acid chain: Phospholipid-transporting ATPase ABCA1 (2261 aa).

Residue Cys3 is the site of S-palmitoyl cysteine attachment. Residue Asn14 is glycosylated (N-linked (GlcNAc...) asparagine). Residues 22 to 42 (TCQLLLEVAWPLFIFLILISV) traverse the membrane as a helical segment. A lipid anchor (S-palmitoyl cysteine) is attached at Cys23. The Extracellular segment spans residues 43–639 (RLSYPPYEQH…DIFLRVMSRS (597 aa)). The interval 69 to 80 (WVQGIICNANNP) is annulus domain 1. An intrachain disulfide couples Cys75 to Cys309. N-linked (GlcNAc...) asparagine glycosylation is found at Asn98, Asn151, Asn161, Asn196, Asn244, Asn292, Asn337, and Asn349. The annulus domain 2 stretch occupies residues 368-379 (SRIIWKALKPLL). N-linked (GlcNAc...) asparagine glycosylation is found at Asn400, Asn478, Asn489, and Asn521. A gateway domain region spans residues 564-594 (ERTNKIKDGYWDPGPRADPFEDMRYVWGGFA). 5 helical membrane passes run 640-660 (MPLFMTLAWIYSVAVIIKGIV), 683-703 (FSWFISSLIPLLVSAGLLVVI), 716-736 (SVVFVFLSVFAVVTILQCFLI), 745-765 (LAAACGGIIYFTLYLPYVLCV), and 777-797 (IFASLLSPVAFGFGCEYFALF). N-linked (GlcNAc...) asparagine glycosylation is present at Asn820. Residues 827-847 (MMLFDTFLYGVMTWYIEAVFP) traverse the membrane as a helical segment. Residues 899–1131 (VSIQNLVKVY…LGTGYYLTLV (233 aa)) enclose the ABC transporter 1 domain. An ATP-binding site is contributed by 933–940 (GHNGAGKT). Residues 1041–1057 (LSVALAFVGGSKVVILD) traverse the membrane as a helical segment. Ser1042 bears the Phosphoserine; by PKA mark. S-palmitoyl cysteine attachment occurs at residues Cys1110 and Cys1111. N-linked (GlcNAc...) asparagine glycosylation is found at Asn1144 and Asn1294. The tract at residues 1283–1312 (RPFTEDDAADPNDSDIDPESRETDLLSGMD) is disordered. The segment covering 1287 to 1299 (EDDAADPNDSDID) has biased composition (acidic residues). The residue at position 1296 (Ser1296) is a Phosphoserine. Residues 1351 to 1371 (IVLPAVFVCIALVFSLIVPPF) form a helical membrane-spanning segment. Residues 1372 to 1656 (GKYPSLELQP…ALMTTSVDVL (285 aa)) are Extracellular-facing. Asn1453 is a glycosylation site (N-linked (GlcNAc...) asparagine). A disulfide bridge links Cys1463 with Cys1477. Residues Asn1504 and Asn1637 are each glycosylated (N-linked (GlcNAc...) asparagine). Helical transmembrane passes span 1657–1677 (VSICVIFAMSFVPASFVVFLI), 1703–1723 (FVWDMCNYVVPATLVIIIFIC), 1735–1755 (LPVLALLLLLYGWSITPLMYP), 1768–1788 (VVLTSVNLFIGINGSVATFVL), 1802–1822 (ILKSVFLIFPHFCLGRGLIDM), and 1852–1872 (NLFAMAVEGVVFFLITVLIQY). Residues 1912-2144 (LEIKELTKIY…FGDGYTIVVR (233 aa)) form the ABC transporter 2 domain. 1946–1953 (GVNGAGKS) lines the ATP pocket. Asn2044 carries N-linked (GlcNAc...) asparagine glycosylation. At Ser2054 the chain carries Phosphoserine; by PKA. Asn2238 carries an N-linked (GlcNAc...) asparagine glycan.

The protein belongs to the ABC transporter superfamily. ABCA family. As to quaternary structure, interacts with MEGF10. May interact with APOE1; functionally associated with APOE1 in the biogenesis of HDLs. Interacts with ABCA8; this interaction potentiates cholesterol efflux. Interacts with ABCA12 and NR1H2; this interaction is required for ABCA1 localization to the cell surface and is necessary for its normal activity and stability. Phosphorylation on Ser-2054 regulates phospholipid efflux. Post-translationally, palmitoylated by ZDHHC8. Palmitoylation is essential for localization to the plasma membrane. Widely expressed, but most abundant in macrophages.

Its subcellular location is the cell membrane. The protein resides in the endosome. It carries out the reaction ATP + H2O + phospholipidSide 1 = ADP + phosphate + phospholipidSide 2.. It catalyses the reaction a 1,2-diacyl-sn-glycero-3-phosphocholine(out) + ATP + H2O = a 1,2-diacyl-sn-glycero-3-phosphocholine(in) + ADP + phosphate + H(+). The enzyme catalyses a 1,2-diacyl-sn-glycero-3-phospho-L-serine(out) + ATP + H2O = a 1,2-diacyl-sn-glycero-3-phospho-L-serine(in) + ADP + phosphate + H(+). The catalysed reaction is a sphingomyelin(in) + ATP + H2O = a sphingomyelin(out) + ADP + phosphate + H(+). It carries out the reaction cholesterol(in) + ATP + H2O = cholesterol(out) + ADP + phosphate + H(+). ATPase activity is decreased by cholesterol and ceramide. ATPase activity is stimulated by phosphatidylcholine and to a lesser degree by phosphatidylserine and sphingomyelin. Phospholipid translocase activity is highly reduced by berylium fluoride and aluminum flouride and reduced by N-ethylmaleimide. Catalyzes the translocation of specific phospholipids from the cytoplasmic to the extracellular/lumenal leaflet of membrane coupled to the hydrolysis of ATP. Thereby, participates in phospholipid transfer to apolipoproteins to form nascent high density lipoproteins/HDLs. Transports preferentially phosphatidylcholine over phosphatidylserine. May play a similar role in the efflux of intracellular cholesterol to apolipoproteins and the formation of nascent high density lipoproteins/HDLs. Translocates phospholipids from the outer face of the plasma membrane and forces it through its gateway and annulus into an elongated hydrophobic tunnel in its extracellular domain. The protein is Phospholipid-transporting ATPase ABCA1 of Homo sapiens (Human).